Reading from the N-terminus, the 280-residue chain is MEKKKAMQIEGYPIEGLSIGGHETCIIFPSLRIAFDIGRCPHRAISQDFLFISHSHMDHIGGLPMYVATRGLYKMKPPTIIVPASIKETVESLFEVHRKLDSSELKHNLVGLDIGEEFIIRKDLKVKAFKTFHVIQSQGYVVYSTKYKLKKEYIGLSGNEIKNLKVSGVEITDSIITPEVAFTGDTTSDFVVDETNADALKAKVLVMESTFLDDSVSVEHARDYGHIHISEIVNHAEKFENKAILLIHFSARYTVKEIEDAVSALPPPLEGRVFALTQGF.

The protein belongs to the RNase Z family. In terms of assembly, homodimer. Zn(2+) serves as cofactor. Requires Ca(2+) as cofactor. Mn(2+) is required as a cofactor. It depends on Mg(2+) as a cofactor.

The protein localises to the cytoplasm. The enzyme catalyses Endonucleolytic cleavage of RNA, removing extra 3' nucleotides from tRNA precursor, generating 3' termini of tRNAs. A 3'-hydroxy group is left at the tRNA terminus and a 5'-phosphoryl group is left at the trailer molecule.. In terms of biological role, zinc phosphodiesterase, which displays tRNA 3'-processing endonuclease activity. Involved in tRNA maturation, by removing a 3'-trailer from precursor tRNA. Can use bis-(p-nitophenyl) phosphate (bpNPP) as substrate. Involved in the processing of small nucleolar RNAs (snoRNAs). In Arabidopsis thaliana (Mouse-ear cress), this protein is tRNase Z TRZ1.